Here is a 273-residue protein sequence, read N- to C-terminus: Dermonecrotic toxin LruSicTox-alphaIC1a (273 aa).

Residue His-5 is part of the active site. Residues Glu-25 and Asp-27 each contribute to the Mg(2+) site. Residue His-41 is the Nucleophile of the active site. 2 cysteine pairs are disulfide-bonded: Cys-45-Cys-51 and Cys-47-Cys-190. Position 85 (Asp-85) interacts with Mg(2+).

It belongs to the arthropod phospholipase D family. Class II subfamily. Mg(2+) is required as a cofactor. Expressed by the venom gland.

Its subcellular location is the secreted. The enzyme catalyses an N-(acyl)-sphingosylphosphocholine = an N-(acyl)-sphingosyl-1,3-cyclic phosphate + choline. It carries out the reaction an N-(acyl)-sphingosylphosphoethanolamine = an N-(acyl)-sphingosyl-1,3-cyclic phosphate + ethanolamine. It catalyses the reaction a 1-acyl-sn-glycero-3-phosphocholine = a 1-acyl-sn-glycero-2,3-cyclic phosphate + choline. The catalysed reaction is a 1-acyl-sn-glycero-3-phosphoethanolamine = a 1-acyl-sn-glycero-2,3-cyclic phosphate + ethanolamine. Functionally, dermonecrotic toxins cleave the phosphodiester linkage between the phosphate and headgroup of certain phospholipids (sphingolipid and lysolipid substrates), forming an alcohol (often choline) and a cyclic phosphate. This toxin acts on sphingomyelin (SM). It may also act on ceramide phosphoethanolamine (CPE), lysophosphatidylcholine (LPC) and lysophosphatidylethanolamine (LPE), but not on lysophosphatidylserine (LPS), and lysophosphatidylglycerol (LPG). It acts by transphosphatidylation, releasing exclusively cyclic phosphate products as second products. Induces dermonecrosis, hemolysis, increased vascular permeability, edema, inflammatory response, and platelet aggregation. In Loxosceles rufescens (Mediterranean recluse spider), this protein is Dermonecrotic toxin LruSicTox-alphaIC1a.